A 198-amino-acid polypeptide reads, in one-letter code: dTTP/UTP pyrophosphatase (198 aa).

The active-site Proton acceptor is aspartate 78.

Belongs to the Maf family. YhdE subfamily. Requires a divalent metal cation as cofactor.

The protein localises to the cytoplasm. It carries out the reaction dTTP + H2O = dTMP + diphosphate + H(+). It catalyses the reaction UTP + H2O = UMP + diphosphate + H(+). In terms of biological role, nucleoside triphosphate pyrophosphatase that hydrolyzes dTTP and UTP. May have a dual role in cell division arrest and in preventing the incorporation of modified nucleotides into cellular nucleic acids. In Chromobacterium violaceum (strain ATCC 12472 / DSM 30191 / JCM 1249 / CCUG 213 / NBRC 12614 / NCIMB 9131 / NCTC 9757 / MK), this protein is dTTP/UTP pyrophosphatase.